The chain runs to 83 residues: Normal mucosa of esophagus-specific gene 1 protein (83 aa).

The protein belongs to the complex I NDUFA4 subunit family. In terms of tissue distribution, expressed mainly in stomach, placenta, small intestine and colon, as well as in normal mucosa of esophagus. Down-regulated in esophageal squamous cell carcinoma.

It is found in the nucleus. The sequence is that of Normal mucosa of esophagus-specific gene 1 protein (NMES1) from Homo sapiens (Human).